We begin with the raw amino-acid sequence, 137 residues long: Basic phospholipase A2 homolog 4a (137 aa).

A signal peptide spans 1 to 16; sequence MRTLWIVTVLLVGVEG. Intrachain disulfides connect C42–C131, C44–C60, C59–C111, C65–C137, C66–C104, C73–C97, and C91–C102. The tract at residues 121-133 is important for membrane-damaging activities in eukaryotes and bacteria; heparin-binding; sequence KKYKIYPKFFCKK.

This sequence belongs to the phospholipase A2 family. Group II subfamily. K49 sub-subfamily. Homodimer; non-covalently linked. Expressed by the venom gland.

The protein localises to the secreted. In terms of biological role, snake venom phospholipase A2 homolog that lacks enzymatic activity. Is myotoxic and displays edema-inducing activities. A model of myotoxic mechanism has been proposed: an apo Lys49-PLA2 is activated by the entrance of a hydrophobic molecule (e.g. fatty acid) at the hydrophobic channel of the protein leading to a reorientation of a monomer. This reorientation causes a transition between 'inactive' to 'active' states, causing alignment of C-terminal and membrane-docking sites (MDoS) side-by-side and putting the membrane-disruption sites (MDiS) in the same plane, exposed to solvent and in a symmetric position for both monomers. The MDoS region stabilizes the toxin on membrane by the interaction of charged residues with phospholipid head groups. Subsequently, the MDiS region destabilizes the membrane with penetration of hydrophobic residues. This insertion causes a disorganization of the membrane, allowing an uncontrolled influx of ions (i.e. calcium and sodium), and eventually triggering irreversible intracellular alterations and cell death. This chain is Basic phospholipase A2 homolog 4a, found in Bothrops asper (Terciopelo).